Reading from the N-terminus, the 1256-residue chain is SNF2 domain-containing protein CLASSY 1 (1256 aa).

Disordered stretches follow at residues 269–290 (ELRR…EIQP) and 448–467 (GNVV…VSRE). Over residues 278–290 (GRPERYGDSEIQP) the composition is skewed to basic and acidic residues. Over residues 451–463 (VHKRNGPHSRIRS) the composition is skewed to basic residues. The region spanning 699–898 (DPSSDKIGGC…FNTLCLARPK (200 aa)) is the Helicase ATP-binding domain. 712 to 719 (HTPGAGKT) lines the ATP pocket. A DEAH box motif is present at residues 849–852 (DEGH). One can recognise a Helicase C-terminal domain in the interval 1061-1222 (FVLNLVFRVV…EFVEDPSQWQ (162 aa)).

Belongs to the helicase family. As to quaternary structure, interacts with NRPD1, NRPD3 and SHH1.

The protein localises to the nucleus. It is found in the nucleoplasm. It localises to the nucleolus. Functionally, probable chromatin remodeling factor. Required for the initial establishment of DNA methylation and for accumulation of 24-nt siRNAs. May act on RNA templates by remodeling ribonucleoprotein structures and thereby influencing the availability of the RNA to polymerases. This Arabidopsis thaliana (Mouse-ear cress) protein is SNF2 domain-containing protein CLASSY 1 (CLSY1).